Reading from the N-terminus, the 849-residue chain is Protein PTHB1 (849 aa).

The interval 1 to 407 (MSLFKARDWW…TQDILPKMEK (407 aa)) is seven-bladed beta-propeller. The segment at 825-849 (LSLSADSGSQQAAEMQGTPINPSVS) is disordered. Residues 828–849 (SADSGSQQAAEMQGTPINPSVS) are compositionally biased toward polar residues.

It is found in the cell projection. The protein localises to the cilium membrane. Its subcellular location is the cytoplasm. The protein resides in the cytoskeleton. It localises to the microtubule organizing center. It is found in the centrosome. The protein localises to the centriolar satellite. Its function is as follows. Required for ciliogenesis. In Xenopus laevis (African clawed frog), this protein is Protein PTHB1 (bbs9).